The chain runs to 122 residues: Small ribosomal subunit protein uS13 (122 aa).

Positions 95-116 (GLPVRGQKTKTNARTRKGRRKT) are enriched in basic residues. The segment at 95–122 (GLPVRGQKTKTNARTRKGRRKTVGAATK) is disordered.

This sequence belongs to the universal ribosomal protein uS13 family. As to quaternary structure, part of the 30S ribosomal subunit. Forms a loose heterodimer with protein S19. Forms two bridges to the 50S subunit in the 70S ribosome.

Functionally, located at the top of the head of the 30S subunit, it contacts several helices of the 16S rRNA. In the 70S ribosome it contacts the 23S rRNA (bridge B1a) and protein L5 of the 50S subunit (bridge B1b), connecting the 2 subunits; these bridges are implicated in subunit movement. Contacts the tRNAs in the A and P-sites. This Campylobacter curvus (strain 525.92) protein is Small ribosomal subunit protein uS13.